Reading from the N-terminus, the 235-residue chain is Large ribosomal subunit protein uL1 (235 aa).

The protein belongs to the universal ribosomal protein uL1 family. In terms of assembly, part of the 50S ribosomal subunit.

Its function is as follows. Binds directly to 23S rRNA. The L1 stalk is quite mobile in the ribosome, and is involved in E site tRNA release. Functionally, protein L1 is also a translational repressor protein, it controls the translation of the L11 operon by binding to its mRNA. The sequence is that of Large ribosomal subunit protein uL1 from Mycolicibacterium vanbaalenii (strain DSM 7251 / JCM 13017 / BCRC 16820 / KCTC 9966 / NRRL B-24157 / PYR-1) (Mycobacterium vanbaalenii).